A 1150-amino-acid chain; its full sequence is BAI1-associated protein 3 (1150 aa).

Residues 22 to 44 are disordered; the sequence is RRKTEQEPEVTNSQEPPTGAWKP. The region spanning 139–298 is the C2 1 domain; sequence SSEEHMEAIM…VKSARANGTA (160 aa). Ca(2+) is bound by residues Asp174 and Asp180. Positions 193–214 are disordered; the sequence is APQEPSGQKEQRFGFRKGSKRS. Positions 258 and 260 each coordinate Ca(2+). In terms of domain architecture, MHD1 spans 626 to 747; that stretch reads FELYLTLADT…EASLFYTELL (122 aa). Residues 851–959 form the MHD2 domain; sequence DEAVAPLLKY…CSTRECIEQF (109 aa). The C2 2 domain occupies 973-1099; that stretch reads RFGRLTVRCH…GIARPHVGGG (127 aa). Ca(2+) is bound by residues Leu1003, Asp1004, Asp1010, Asp1068, Asp1070, Ser1073, and Asp1076.

The protein belongs to the unc-13 family. In terms of assembly, interacts with ADGRB1, this interaction is direct. Interacts with endosomal SNARE proteins VAMP3, VAMP4, STX6 and STX16; this interaction is increased in the presence of calcium. Ca(2+) serves as cofactor. Prominently expressed in brain structures including hypothalamus, amygdala, stria terminalis and periaqueductal gray (at protein level). Expressed in nonneuronal tissues, including placenta, lung, pancreas, spleen, and testes. Within placenta, expression is restricted to the syncytiotrophoblasts.

It localises to the cytoplasm. The protein localises to the cytosol. The protein resides in the recycling endosome membrane. Its subcellular location is the late endosome membrane. It is found in the golgi apparatus. It localises to the trans-Golgi network membrane. The protein localises to the cell membrane. In terms of biological role, functions in endosome to Golgi retrograde transport. In response to calcium influx, may interact with SNARE fusion receptors and membrane phospholipids to mediate endosome fusion with the trans-Golgi network. By promoting the recycling of secretory vesicle transmembrane proteins, it indirectly controls dense-core secretory vesicle biogenesis, maturation and their ability to mediate the constitutive and regulated secretion of neurotransmitters and hormones. May regulate behavior and food intake by controlling calcium-stimulated exocytosis of neurotransmitters including NPY and serotonin and hormones like insulin. Proposed to play a role in hypothalamic neuronal firing by modulating gamma-aminobutyric acid (GABA)ergic inhibitory neurotransmission. In Mus musculus (Mouse), this protein is BAI1-associated protein 3.